Consider the following 4241-residue polypeptide: Intermembrane lipid transfer protein vps13E (4241 aa).

Positions 5-97 constitute a Chorein N-terminal domain; it reads ILPGLLKKIL…GPKDIINTFS (93 aa). Residues 120–140 show a composition bias toward low complexity; sequence IDSNSNNNNKKNAPSSSSSND. Disordered stretches follow at residues 120–143, 234–340, 942–986, 1220–1256, 1345–1369, 1534–1571, 2148–2192, and 2217–2282; these read IDSN…DDFF, LSKN…QQQQ, LGTG…VEKE, NNNN…NQKP, TTTT…QNRH, KPSS…YNNN, QQQQ…PNVH, and VTEK…NNIN. Polar residues predominate over residues 234–254; the sequence is LSKNTSTHQQQQPTFNPYVGS. The span at 255-264 shows a compositional bias: low complexity; sequence QQQQQQQPQQ. A compositionally biased stretch (polar residues) spans 279-289; it reads FMNNKNSDEGI. Composition is skewed to low complexity over residues 290–313, 325–340, and 942–952; these read SSSS…LNDN, QPTP…QQQQ, and LGTGNGINNNN. Residues 968–986 are compositionally biased toward basic and acidic residues; the sequence is DDGKYPEQDDLDDSKVEKE. Residues 1220 to 1253 are compositionally biased toward low complexity; sequence NNNNNNNNNNNNNNNNNNNNNRNLNNNNNNNNNN. A compositionally biased stretch (basic residues) spans 1352–1369; that stretch reads RYHHQNHHNHQHKKQNRH. Low complexity-rich tracts occupy residues 1538 to 1551, 1559 to 1571, and 2148 to 2177; these read KDNN…NNSD, DSSS…YNNN, and QQQQ…NNNN. Residues 2178–2188 show a composition bias toward polar residues; the sequence is VSGNTINNKSV. Acidic residues predominate over residues 2246-2259; that stretch reads SDDDDDEGEDEDIG. The span at 2265 to 2282 shows a compositional bias: polar residues; the sequence is DHSTSSAPTSRSNYNNIN. Residues 2825–3134 form the SHR-BD domain; it reads KIVFYNQYWI…IPYVWDLPLE (310 aa). Disordered stretches follow at residues 3973-4000, 4059-4094, and 4109-4140; these read PTTT…YPTE, YQHS…RQLQ, and KSMA…SGSG. A compositionally biased stretch (low complexity) spans 3974–3984; that stretch reads TTTTTTNTTTT. A compositionally biased stretch (polar residues) spans 3985–4000; the sequence is PYQSSQNIHSTPYPTE. Over residues 4128–4140 the composition is skewed to polar residues; sequence SNNRLSLTPSGSG.

It belongs to the VPS13 family.

Its subcellular location is the membrane. Mediates the transfer of lipids between membranes at organelle contact sites. The chain is Intermembrane lipid transfer protein vps13E (vps13E) from Dictyostelium discoideum (Social amoeba).